We begin with the raw amino-acid sequence, 469 residues long: Neuraminidase (469 aa).

Topologically, residues 1–9 (MNPNQKIIT) are intravirion. A helical transmembrane segment spans residues 10 to 30 (IGSVSLTIATICFLMQIAILV). The involved in apical transport and lipid raft association stretch occupies residues 11–33 (GSVSLTIATICFLMQIAILVTTV). Residues 31–469 (TTVTLHFKQY…DGADINLMPI (439 aa)) are Virion surface-facing. The hypervariable stalk region stretch occupies residues 36–88 (HFKQYECSSPPNNQVMPCEPIIIERNITEIVYLTNTTIEKEICPKLVEYRNWS). 3 N-linked (GlcNAc...) asparagine; by host glycosylation sites follow: asparagine 61, asparagine 70, and asparagine 86. The tract at residues 91 to 469 (QCKITGFAPF…DGADINLMPI (379 aa)) is head of neuraminidase. 8 cysteine pairs are disulfide-bonded: cysteine 92-cysteine 417, cysteine 124-cysteine 129, cysteine 183-cysteine 230, cysteine 232-cysteine 237, cysteine 278-cysteine 291, cysteine 280-cysteine 289, cysteine 318-cysteine 337, and cysteine 421-cysteine 447. Substrate is bound at residue arginine 118. Asparagine 146 is a glycosylation site (N-linked (GlcNAc...) asparagine; by host). The active-site Proton donor/acceptor is aspartate 151. Arginine 152 is a substrate binding site. 2 N-linked (GlcNAc...) asparagine; by host glycosylation sites follow: asparagine 200 and asparagine 234. 276–277 (EE) serves as a coordination point for substrate. Residue arginine 292 participates in substrate binding. Ca(2+) is bound by residues aspartate 293, glycine 297, and aspartate 324. Arginine 371 provides a ligand contact to substrate. A glycan (N-linked (GlcNAc...) asparagine; by host) is linked at asparagine 402. Residue tyrosine 406 is the Nucleophile of the active site.

Belongs to the glycosyl hydrolase 34 family. As to quaternary structure, homotetramer. Requires Ca(2+) as cofactor. In terms of processing, N-glycosylated.

It is found in the virion membrane. Its subcellular location is the host apical cell membrane. The enzyme catalyses Hydrolysis of alpha-(2-&gt;3)-, alpha-(2-&gt;6)-, alpha-(2-&gt;8)- glycosidic linkages of terminal sialic acid residues in oligosaccharides, glycoproteins, glycolipids, colominic acid and synthetic substrates.. Its activity is regulated as follows. Inhibited by the neuraminidase inhibitors zanamivir (Relenza) and oseltamivir (Tamiflu). These drugs interfere with the release of progeny virus from infected cells and are effective against all influenza strains. Resistance to neuraminidase inhibitors is quite rare. Its function is as follows. Catalyzes the removal of terminal sialic acid residues from viral and cellular glycoconjugates. Cleaves off the terminal sialic acids on the glycosylated HA during virus budding to facilitate virus release. Additionally helps virus spread through the circulation by further removing sialic acids from the cell surface. These cleavages prevent self-aggregation and ensure the efficient spread of the progeny virus from cell to cell. Otherwise, infection would be limited to one round of replication. Described as a receptor-destroying enzyme because it cleaves a terminal sialic acid from the cellular receptors. May facilitate viral invasion of the upper airways by cleaving the sialic acid moieties on the mucin of the airway epithelial cells. Likely to plays a role in the budding process through its association with lipid rafts during intracellular transport. May additionally display a raft-association independent effect on budding. Plays a role in the determination of host range restriction on replication and virulence. Sialidase activity in late endosome/lysosome traffic seems to enhance virus replication. This Influenza A virus (strain A/Memphis/4/1980 H3N2) protein is Neuraminidase.